The sequence spans 257 residues: 3-methyl-2-oxobutanoate hydroxymethyltransferase (257 aa).

The Mg(2+) site is built by aspartate 42 and aspartate 86. Residues 42–43 (DS), aspartate 86, and lysine 116 each bind 3-methyl-2-oxobutanoate. Glutamate 118 serves as a coordination point for Mg(2+). Glutamate 185 (proton acceptor) is an active-site residue.

The protein belongs to the PanB family. In terms of assembly, homodecamer; pentamer of dimers. It depends on Mg(2+) as a cofactor.

The protein resides in the cytoplasm. The catalysed reaction is 3-methyl-2-oxobutanoate + (6R)-5,10-methylene-5,6,7,8-tetrahydrofolate + H2O = 2-dehydropantoate + (6S)-5,6,7,8-tetrahydrofolate. The protein operates within cofactor biosynthesis; (R)-pantothenate biosynthesis; (R)-pantoate from 3-methyl-2-oxobutanoate: step 1/2. In terms of biological role, catalyzes the reversible reaction in which hydroxymethyl group from 5,10-methylenetetrahydrofolate is transferred onto alpha-ketoisovalerate to form ketopantoate. In Prochlorococcus marinus (strain AS9601), this protein is 3-methyl-2-oxobutanoate hydroxymethyltransferase.